A 156-amino-acid polypeptide reads, in one-letter code: ATP synthase subunit b (156 aa).

A helical transmembrane segment spans residues 7-27 (LFAQMVVFLILAWFTMKFVWP).

It belongs to the ATPase B chain family. F-type ATPases have 2 components, F(1) - the catalytic core - and F(0) - the membrane proton channel. F(1) has five subunits: alpha(3), beta(3), gamma(1), delta(1), epsilon(1). F(0) has three main subunits: a(1), b(2) and c(10-14). The alpha and beta chains form an alternating ring which encloses part of the gamma chain. F(1) is attached to F(0) by a central stalk formed by the gamma and epsilon chains, while a peripheral stalk is formed by the delta and b chains.

The protein resides in the cell inner membrane. In terms of biological role, f(1)F(0) ATP synthase produces ATP from ADP in the presence of a proton or sodium gradient. F-type ATPases consist of two structural domains, F(1) containing the extramembraneous catalytic core and F(0) containing the membrane proton channel, linked together by a central stalk and a peripheral stalk. During catalysis, ATP synthesis in the catalytic domain of F(1) is coupled via a rotary mechanism of the central stalk subunits to proton translocation. Component of the F(0) channel, it forms part of the peripheral stalk, linking F(1) to F(0). This chain is ATP synthase subunit b, found in Paraburkholderia phymatum (strain DSM 17167 / CIP 108236 / LMG 21445 / STM815) (Burkholderia phymatum).